We begin with the raw amino-acid sequence, 206 residues long: Small ribosomal subunit protein uS4 (206 aa).

The tract at residues 15–46 (MGENIWGRPKSPVNKREYGPGQHGQRRKNKLS) is disordered. Positions 94-154 (RRLDAIVYRA…EKSRQLALVL (61 aa)) constitute an S4 RNA-binding domain.

It belongs to the universal ribosomal protein uS4 family. In terms of assembly, part of the 30S ribosomal subunit. Contacts protein S5. The interaction surface between S4 and S5 is involved in control of translational fidelity.

One of the primary rRNA binding proteins, it binds directly to 16S rRNA where it nucleates assembly of the body of the 30S subunit. In terms of biological role, with S5 and S12 plays an important role in translational accuracy. The sequence is that of Small ribosomal subunit protein uS4 from Cereibacter sphaeroides (strain ATCC 17029 / ATH 2.4.9) (Rhodobacter sphaeroides).